A 563-amino-acid chain; its full sequence is Dicarboxylate transporter 2.1, chloroplastic (563 aa).

Residues methionine 1–arginine 68 constitute a chloroplast transit peptide. Disordered stretches follow at residues threonine 16 to serine 45 and alanine 71 to glutamine 92. A compositionally biased stretch (low complexity) spans arginine 28–serine 45. Pro residues predominate over residues asparagine 76–serine 90. 12 helical membrane-spanning segments follow: residues leucine 96–proline 116, isoleucine 134–alanine 154, alanine 165–alanine 185, alanine 234–asparagine 254, leucine 261–leucine 281, tryptophan 308–tyrosine 328, asparagine 358–threonine 378, leucine 379–valine 399, threonine 414–valine 434, leucine 450–phenylalanine 470, alanine 483–alanine 503, and isoleucine 537–tryptophan 557.

The protein belongs to the SLC13A/DASS transporter (TC 2.A.47) family. DIT1 subfamily. In terms of tissue distribution, expressed in roots, rosette and cauline leaves, stems, flowers and siliques.

The protein localises to the plastid. Its subcellular location is the chloroplast inner membrane. In terms of biological role, glutamate/malate translocator involved with DIT1 in primary ammonia assimilation and in the re-assimilation of ammonia generated by the photorespiratory pathway. Exports the end product of ammonia assimilation, glutamate, from plastids to the cytosol. The precursor for ammonia assimilation, 2-oxoglutarate, is imported from the cytosol by DIT1. The protein is Dicarboxylate transporter 2.1, chloroplastic (DIT2-1) of Arabidopsis thaliana (Mouse-ear cress).